The primary structure comprises 276 residues: Large ribosomal subunit protein uL2 (276 aa).

The tract at residues Gly-224–Thr-265 is disordered.

The protein belongs to the universal ribosomal protein uL2 family. As to quaternary structure, part of the 50S ribosomal subunit. Forms a bridge to the 30S subunit in the 70S ribosome.

Its function is as follows. One of the primary rRNA binding proteins. Required for association of the 30S and 50S subunits to form the 70S ribosome, for tRNA binding and peptide bond formation. It has been suggested to have peptidyltransferase activity; this is somewhat controversial. Makes several contacts with the 16S rRNA in the 70S ribosome. This Blochmanniella floridana protein is Large ribosomal subunit protein uL2.